A 431-amino-acid polypeptide reads, in one-letter code: Serine--tRNA ligase (431 aa).

Position 237 to 239 (237 to 239 (TAE)) interacts with L-serine. Position 268–270 (268–270 (RSE)) interacts with ATP. Glu291 serves as a coordination point for L-serine. 355-358 (EISS) contacts ATP. Residue Ser390 participates in L-serine binding.

Belongs to the class-II aminoacyl-tRNA synthetase family. Type-1 seryl-tRNA synthetase subfamily. Homodimer. The tRNA molecule binds across the dimer.

The protein resides in the cytoplasm. The enzyme catalyses tRNA(Ser) + L-serine + ATP = L-seryl-tRNA(Ser) + AMP + diphosphate + H(+). It catalyses the reaction tRNA(Sec) + L-serine + ATP = L-seryl-tRNA(Sec) + AMP + diphosphate + H(+). It functions in the pathway aminoacyl-tRNA biosynthesis; selenocysteinyl-tRNA(Sec) biosynthesis; L-seryl-tRNA(Sec) from L-serine and tRNA(Sec): step 1/1. Functionally, catalyzes the attachment of serine to tRNA(Ser). Is also able to aminoacylate tRNA(Sec) with serine, to form the misacylated tRNA L-seryl-tRNA(Sec), which will be further converted into selenocysteinyl-tRNA(Sec). The chain is Serine--tRNA ligase from Neisseria gonorrhoeae (strain ATCC 700825 / FA 1090).